Consider the following 394-residue polypeptide: Elongation factor Tu (394 aa).

The 195-residue stretch at 10 to 204 (KPHVNVGTIG…YLDSYIPEPE (195 aa)) folds into the tr-type G domain. The interval 19-26 (GHVDHGKT) is G1. Residue 19–26 (GHVDHGKT) coordinates GTP. T26 contacts Mg(2+). The G2 stretch occupies residues 60–64 (GITIN). Residues 81-84 (DCPG) are G3. Residues 81–85 (DCPGH) and 136–139 (NKCD) contribute to the GTP site. Residues 136–139 (NKCD) form a G4 region. Residues 174–176 (SAL) are G5.

This sequence belongs to the TRAFAC class translation factor GTPase superfamily. Classic translation factor GTPase family. EF-Tu/EF-1A subfamily. Monomer.

It is found in the cytoplasm. The enzyme catalyses GTP + H2O = GDP + phosphate + H(+). GTP hydrolase that promotes the GTP-dependent binding of aminoacyl-tRNA to the A-site of ribosomes during protein biosynthesis. The polypeptide is Elongation factor Tu (Pectobacterium atrosepticum (strain SCRI 1043 / ATCC BAA-672) (Erwinia carotovora subsp. atroseptica)).